Consider the following 469-residue polypeptide: ATP-dependent protease ATPase subunit HslU (469 aa).

Residues I24, 66 to 71, D282, E347, and R419 each bind ATP; that span reads GVGKTE.

Belongs to the ClpX chaperone family. HslU subfamily. In terms of assembly, a double ring-shaped homohexamer of HslV is capped on each side by a ring-shaped HslU homohexamer. The assembly of the HslU/HslV complex is dependent on binding of ATP.

Its subcellular location is the cytoplasm. In terms of biological role, ATPase subunit of a proteasome-like degradation complex; this subunit has chaperone activity. The binding of ATP and its subsequent hydrolysis by HslU are essential for unfolding of protein substrates subsequently hydrolyzed by HslV. HslU recognizes the N-terminal part of its protein substrates and unfolds these before they are guided to HslV for hydrolysis. This is ATP-dependent protease ATPase subunit HslU from Listeria welshimeri serovar 6b (strain ATCC 35897 / DSM 20650 / CCUG 15529 / CIP 8149 / NCTC 11857 / SLCC 5334 / V8).